Consider the following 320-residue polypeptide: 1-aminocyclopropane-1-carboxylate oxidase 3 (320 aa).

Residues 111-131 are a coiled coil; sequence NEYRLAMKDFGKRLEILAEEL. A Fe2OG dioxygenase domain is found at 155–256; the sequence is GPTFATKLSN…RMSIASFYNP (102 aa). Histidine 180, aspartate 182, and histidine 237 together coordinate Fe cation. Position 247 (arginine 247) interacts with 2-oxoglutarate.

Belongs to the iron/ascorbate-dependent oxidoreductase family. Requires Fe(2+) as cofactor.

The catalysed reaction is 1-aminocyclopropane-1-carboxylate + L-ascorbate + O2 = ethene + L-dehydroascorbate + hydrogen cyanide + CO2 + 2 H2O. Its pathway is alkene biosynthesis; ethylene biosynthesis via S-adenosyl-L-methionine; ethylene from S-adenosyl-L-methionine: step 2/2. Its function is as follows. Enzyme involved in the ethylene biosynthesis. May promote stem elongation by maximizing the extensibility cells, possibly by activating ethylene biosynthesis, in response to very-long-chain fatty acids (VLCFAs C20:0 to C30:0). The sequence is that of 1-aminocyclopropane-1-carboxylate oxidase 3 from Arabidopsis thaliana (Mouse-ear cress).